Reading from the N-terminus, the 338-residue chain is Ketol-acid reductoisomerase (NADP(+)) (338 aa).

Positions 1-181 (MKVFYDKDAD…GGGRAGIIET (181 aa)) constitute a KARI N-terminal Rossmann domain. NADP(+) is bound by residues 24–27 (YGSQ), Arg47, and Ser52. His107 is a catalytic residue. Gly133 lines the NADP(+) pocket. The region spanning 182–327 (NFREETETDL…EKLRAMMPWI (146 aa)) is the KARI C-terminal knotted domain. Mg(2+) contacts are provided by Asp190, Glu194, Glu226, and Glu230. Residue Ser251 coordinates substrate.

The protein belongs to the ketol-acid reductoisomerase family. Mg(2+) serves as cofactor.

It carries out the reaction (2R)-2,3-dihydroxy-3-methylbutanoate + NADP(+) = (2S)-2-acetolactate + NADPH + H(+). The enzyme catalyses (2R,3R)-2,3-dihydroxy-3-methylpentanoate + NADP(+) = (S)-2-ethyl-2-hydroxy-3-oxobutanoate + NADPH + H(+). It participates in amino-acid biosynthesis; L-isoleucine biosynthesis; L-isoleucine from 2-oxobutanoate: step 2/4. It functions in the pathway amino-acid biosynthesis; L-valine biosynthesis; L-valine from pyruvate: step 2/4. Functionally, involved in the biosynthesis of branched-chain amino acids (BCAA). Catalyzes an alkyl-migration followed by a ketol-acid reduction of (S)-2-acetolactate (S2AL) to yield (R)-2,3-dihydroxy-isovalerate. In the isomerase reaction, S2AL is rearranged via a Mg-dependent methyl migration to produce 3-hydroxy-3-methyl-2-ketobutyrate (HMKB). In the reductase reaction, this 2-ketoacid undergoes a metal-dependent reduction by NADPH to yield (R)-2,3-dihydroxy-isovalerate. In Cupriavidus pinatubonensis (strain JMP 134 / LMG 1197) (Cupriavidus necator (strain JMP 134)), this protein is Ketol-acid reductoisomerase (NADP(+)).